The sequence spans 88 residues: Histone H2A-beta, sperm (88 aa).

This sequence belongs to the histone H2A family. As to quaternary structure, the nucleosome is a histone octamer containing two molecules each of H2A, H2B, H3 and H4 assembled in one H3-H4 heterotetramer and two H2A-H2B heterodimers. The octamer wraps approximately 147 bp of DNA. In terms of processing, monoubiquitination in C-terminus gives a specific tag for epigenetic transcriptional repression.

The protein localises to the nucleus. Its subcellular location is the chromosome. In terms of biological role, core component of nucleosome. Nucleosomes wrap and compact DNA into chromatin, limiting DNA accessibility to the cellular machineries which require DNA as a template. Histones thereby play a central role in transcription regulation, DNA repair, DNA replication and chromosomal stability. DNA accessibility is regulated via a complex set of post-translational modifications of histones, also called histone code, and nucleosome remodeling. In Strongylocentrotus purpuratus (Purple sea urchin), this protein is Histone H2A-beta, sperm.